Here is a 368-residue protein sequence, read N- to C-terminus: Alanine racemase (368 aa).

Lysine 35 (proton acceptor; specific for D-alanine) is an active-site residue. Position 35 is an N6-(pyridoxal phosphate)lysine (lysine 35). A substrate-binding site is contributed by arginine 130. Tyrosine 253 (proton acceptor; specific for L-alanine) is an active-site residue. Position 305 (methionine 305) interacts with substrate.

It belongs to the alanine racemase family. It depends on pyridoxal 5'-phosphate as a cofactor.

The catalysed reaction is L-alanine = D-alanine. The protein operates within amino-acid biosynthesis; D-alanine biosynthesis; D-alanine from L-alanine: step 1/1. Its function is as follows. Catalyzes the interconversion of L-alanine and D-alanine. May also act on other amino acids. This Cupriavidus metallidurans (strain ATCC 43123 / DSM 2839 / NBRC 102507 / CH34) (Ralstonia metallidurans) protein is Alanine racemase (alr).